A 689-amino-acid chain; its full sequence is DNA ligase (689 aa).

NAD(+) contacts are provided by residues 40–44 (DQEYD), 89–90 (SL), and glutamate 122. Lysine 124 acts as the N6-AMP-lysine intermediate in catalysis. NAD(+)-binding residues include arginine 145, glutamate 182, lysine 300, and lysine 325. Zn(2+) is bound by residues cysteine 419, cysteine 422, cysteine 437, and cysteine 442. Positions 600 to 689 (QADGVLTGAT…SADASADASA (90 aa)) constitute a BRCT domain.

This sequence belongs to the NAD-dependent DNA ligase family. LigA subfamily. The cofactor is Mg(2+). Mn(2+) is required as a cofactor.

It catalyses the reaction NAD(+) + (deoxyribonucleotide)n-3'-hydroxyl + 5'-phospho-(deoxyribonucleotide)m = (deoxyribonucleotide)n+m + AMP + beta-nicotinamide D-nucleotide.. Its function is as follows. DNA ligase that catalyzes the formation of phosphodiester linkages between 5'-phosphoryl and 3'-hydroxyl groups in double-stranded DNA using NAD as a coenzyme and as the energy source for the reaction. It is essential for DNA replication and repair of damaged DNA. The chain is DNA ligase from Gemmatimonas aurantiaca (strain DSM 14586 / JCM 11422 / NBRC 100505 / T-27).